Reading from the N-terminus, the 184-residue chain is Small ribosomal subunit protein bS16 (184 aa).

The span at 150-160 shows a compositional bias: basic and acidic residues; sequence KKAAEAAEKAA. Positions 150–184 are disordered; sequence KKAAEAAEKAAAEAPAEEATEAPAEEAAATEAAAE. Over residues 164–173 the composition is skewed to acidic residues; the sequence is PAEEATEAPA. Over residues 174–184 the composition is skewed to low complexity; that stretch reads EEAAATEAAAE.

This sequence belongs to the bacterial ribosomal protein bS16 family.

The polypeptide is Small ribosomal subunit protein bS16 (Bacteroides thetaiotaomicron (strain ATCC 29148 / DSM 2079 / JCM 5827 / CCUG 10774 / NCTC 10582 / VPI-5482 / E50)).